The primary structure comprises 553 residues: Nucleoside-diphosphatase mig-23 (553 aa).

The Cytoplasmic portion of the chain corresponds to 1 to 8; the sequence is MRVSRRFT. Residues 9 to 29 form a helical membrane-spanning segment; the sequence is ILAITAMIFLSLIICIYAVAA. The Lumenal portion of the chain corresponds to 30-489; the sequence is HTTVNVILQK…IVKETHSASE (460 aa). E174 acts as the Proton acceptor in catalysis. N-linked (GlcNAc...) asparagine glycans are attached at residues N190 and N284. Residues 490 to 510 traverse the membrane as a helical segment; the sequence is SLWAPLFFLSAVFCLFVLVCA. The Cytoplasmic portion of the chain corresponds to 511–553; sequence KEHSLLCFDDKRRASFGLTRRQYSYKMLKEDRTSSSAFLENFA.

The protein belongs to the GDA1/CD39 NTPase family.

It localises to the golgi apparatus membrane. It catalyses the reaction a ribonucleoside 5'-diphosphate + H2O = a ribonucleoside 5'-phosphate + phosphate + H(+). Functionally, seems to be able to hydrolyze ADP, UDP and GDP. Supports mig-17 glycosylation and surface expression, which is required for proper migration of distal tip cells during gonad morphogenesis. This chain is Nucleoside-diphosphatase mig-23, found in Caenorhabditis briggsae.